We begin with the raw amino-acid sequence, 359 residues long: 3-dehydroquinate synthase (359 aa).

NAD(+) is bound by residues 71-76 (DGEAYK), 105-109 (GVIGD), 129-130 (TT), K142, and K151. 3 residues coordinate Zn(2+): E184, H247, and H264.

It belongs to the sugar phosphate cyclases superfamily. Dehydroquinate synthase family. Co(2+) is required as a cofactor. Requires Zn(2+) as cofactor. The cofactor is NAD(+).

The protein resides in the cytoplasm. The catalysed reaction is 7-phospho-2-dehydro-3-deoxy-D-arabino-heptonate = 3-dehydroquinate + phosphate. The protein operates within metabolic intermediate biosynthesis; chorismate biosynthesis; chorismate from D-erythrose 4-phosphate and phosphoenolpyruvate: step 2/7. Functionally, catalyzes the conversion of 3-deoxy-D-arabino-heptulosonate 7-phosphate (DAHP) to dehydroquinate (DHQ). This Burkholderia multivorans (strain ATCC 17616 / 249) protein is 3-dehydroquinate synthase.